The following is a 741-amino-acid chain: Pentatricopeptide repeat-containing protein At1g08070, chloroplastic (741 aa).

PPR repeat units follow at residues 98 to 132 (NLLI…GLLP), 133 to 167 (NSYT…GCDL), 168 to 202 (DLYV…DVVS), 203 to 229 (YTAL…IPVK), 230 to 264 (DVVS…NVRP), 265 to 299 (DEST…GFGS), 300 to 330 (NLKI…LPYK), 331 to 365 (DVIS…GETP), 366 to 396 (NDVT…IDKR), 403 to 433 (ASSL…ILHK), 434 to 468 (SLSS…GIQP), 469 to 499 (DDIT…MTQD), and 505 to 535 (KLEH…MEME). Residues 540-615 (IWCSLLKACK…VPGCSSIEID (76 aa)) are type E motif. Residues 616-646 (SVVHEFIIGDKFHPRNREIYGMLEEMEVLLE) form a type E(+) motif region. The tract at residues 647–741 (KAGFVPDTSE…DGVCSCNDYW (95 aa)) is type DYW motif.

It belongs to the PPR family. PCMP-H subfamily. As to quaternary structure, interacts with ORRM1. Interacts with VAR3/OZ1.

The protein localises to the plastid. It is found in the chloroplast. Its function is as follows. Involved in multiple sites RNA editing events in chloroplasts. Involved in the editing of the site 9 of ndhB (ndhB-9) and site 1 of ndhG (ndhG-1) transcripts, which are two plastid-encoded subunits of the chloroplast NAD(P)H dehydrogenase (NDH) complex. Not essential for the activity of the NDH complex of the photosynthetic electron transport chain. This is Pentatricopeptide repeat-containing protein At1g08070, chloroplastic (PCMP-H12) from Arabidopsis thaliana (Mouse-ear cress).